Reading from the N-terminus, the 246-residue chain is Azurocidin (246 aa).

The N-terminal stretch at 1–19 (MPALRFLALLASLLATSRV) is a signal peptide. The propeptide occupies 20-26 (GLATLAD). In terms of domain architecture, Peptidase S1 spans 27 to 242 (IVGGRRAQPQ…FRNWIDSVLN (216 aa)). A disulfide bond links cysteine 52 and cysteine 68. N-linked (GlcNAc...) asparagine glycosylation is found at asparagine 139 and asparagine 170. Intrachain disulfides connect cysteine 148–cysteine 205 and cysteine 178–cysteine 184. The propeptide occupies 245 to 246 (PA).

Belongs to the peptidase S1 family. Elastase subfamily.

It is found in the cytoplasmic granule membrane. In terms of biological role, this is a neutrophil granule-derived antibacterial and monocyte- and fibroblast-specific chemotactic glycoprotein. Binds heparin. The polypeptide is Azurocidin (Sus scrofa (Pig)).